A 349-amino-acid polypeptide reads, in one-letter code: NADH-quinone oxidoreductase subunit H (349 aa).

8 helical membrane passes run 11–31 (FPLL…LLLV), 83–103 (GVFL…WAVI), 116–136 (VGLL…IMGG), 162–182 (IGFV…TTIV), 200–220 (FLDW…ISAL), 252–272 (LFFL…TILF), 288–308 (VPGI…FAMV), and 323–343 (LGWK…AAFL).

The protein belongs to the complex I subunit 1 family. In terms of assembly, NDH-1 is composed of 14 different subunits. Subunits NuoA, H, J, K, L, M, N constitute the membrane sector of the complex.

The protein resides in the cell inner membrane. The catalysed reaction is a quinone + NADH + 5 H(+)(in) = a quinol + NAD(+) + 4 H(+)(out). In terms of biological role, NDH-1 shuttles electrons from NADH, via FMN and iron-sulfur (Fe-S) centers, to quinones in the respiratory chain. The immediate electron acceptor for the enzyme in this species is believed to be ubiquinone. Couples the redox reaction to proton translocation (for every two electrons transferred, four hydrogen ions are translocated across the cytoplasmic membrane), and thus conserves the redox energy in a proton gradient. This subunit may bind ubiquinone. This is NADH-quinone oxidoreductase subunit H from Bartonella henselae (strain ATCC 49882 / DSM 28221 / CCUG 30454 / Houston 1) (Rochalimaea henselae).